Here is a 393-residue protein sequence, read N- to C-terminus: Dwarfin sma-3 (393 aa).

The MH1 domain occupies 10–139 (PAVKKLLGWK…YQRLSRPQGL (130 aa)). Cys-65, Cys-110, Cys-124, and His-129 together coordinate Zn(2+). The segment at 136–190 (PQGLNSSMPSPQPISSPNTIWQSSGSSTASCASSPSPSVFSEDGGEVQVHQRPPP) is disordered. Low complexity predominate over residues 141-176 (SSMPSPQPISSPNTIWQSSGSSTASCASSPSPSVFS). Positions 197–393 (WAQITYFELN…TNLMEPNSMT (197 aa)) constitute an MH2 domain.

It belongs to the dwarfin/SMAD family.

Its subcellular location is the cytoplasm. The protein resides in the nucleus. In terms of biological role, involved in TGF-beta pathway. Plays a role in male tail tip morphogenesis. The protein is Dwarfin sma-3 of Caenorhabditis elegans.